Consider the following 160-residue polypeptide: SsrA-binding protein (160 aa).

Residues 133–160 form a disordered region; that stretch reads GKKLHDKRDTEKERDWKREQQRLLRDRG. The segment covering 138-160 has biased composition (basic and acidic residues); sequence DKRDTEKERDWKREQQRLLRDRG.

Belongs to the SmpB family.

It localises to the cytoplasm. Required for rescue of stalled ribosomes mediated by trans-translation. Binds to transfer-messenger RNA (tmRNA), required for stable association of tmRNA with ribosomes. tmRNA and SmpB together mimic tRNA shape, replacing the anticodon stem-loop with SmpB. tmRNA is encoded by the ssrA gene; the 2 termini fold to resemble tRNA(Ala) and it encodes a 'tag peptide', a short internal open reading frame. During trans-translation Ala-aminoacylated tmRNA acts like a tRNA, entering the A-site of stalled ribosomes, displacing the stalled mRNA. The ribosome then switches to translate the ORF on the tmRNA; the nascent peptide is terminated with the 'tag peptide' encoded by the tmRNA and targeted for degradation. The ribosome is freed to recommence translation, which seems to be the essential function of trans-translation. This chain is SsrA-binding protein, found in Rhizorhabdus wittichii (strain DSM 6014 / CCUG 31198 / JCM 15750 / NBRC 105917 / EY 4224 / RW1) (Sphingomonas wittichii).